Reading from the N-terminus, the 502-residue chain is MDYDFKAKLAAERERVEDLFEYEGCKVGRGTYGHVYKARRKDGKDEKEYALKQIEGTGISMSACREIALLRELKHPNVIALQKVFLSHSDRKVWLLFDYAEHDLWHIIKFHRASKANKKPMQLPRSMVKSLLYQILDGIHYLHANWVLHRDLKPANILVMGEGPERGRVKIADMGFARLFNSPLKPLADLDPVVVTFWYRAPELLLGARHYTKAIDIWAIGCIFAELLTSEPIFHCRQEDIKTSNPFHHDQLDRIFSVMGFPADKDWEDIRKMPEYPTLQKDFRRTTYANSSLIKYMEKHKVKPDSKVFLLLQKLLTMDPTKRITSEQALQDPYFQEDPLPTLDVFAGCQIPYPKREFLNEDDPEEKGDKNQQQQQNQHQQPTAPPQQAAAPPQAPPPQQNSTQTNGTAGGAGAGVGGTGAGLQHSQDSSLNQVPPNKKPRLGPSGANSGGPVMPSDYQHSSSRLNYQSSVQGSSQSQSTLGYSSSSQQSSQYHPSHQAHRY.

Position 1 is an N-acetylmethionine (methionine 1). One can recognise a Protein kinase domain in the interval 21-335; the sequence is EYEGCKVGRG…SEQALQDPYF (315 aa). Residues 27–35 and lysine 52 each bind ATP; that span reads VGRGTYGHV. Catalysis depends on aspartate 151, which acts as the Proton acceptor. Residues 359-502 form a disordered region; that stretch reads LNEDDPEEKG…YHPSHQAHRY (144 aa). The span at 371-392 shows a compositional bias: low complexity; the sequence is NQQQQQNQHQQPTAPPQQAAAP. Residues 408 to 421 are compositionally biased toward gly residues; sequence TAGGAGAGVGGTGA. Over residues 424–435 the composition is skewed to polar residues; the sequence is QHSQDSSLNQVP. Residue serine 449 is modified to Phosphoserine. Positions 458-467 are enriched in polar residues; it reads YQHSSSRLNY. Residues 468–496 show a composition bias toward low complexity; that stretch reads QSSVQGSSQSQSTLGYSSSSQQSSQYHPS.

The protein belongs to the protein kinase superfamily. CMGC Ser/Thr protein kinase family. CDC2/CDKX subfamily.

The protein localises to the cytoplasm. The protein resides in the perinuclear region. It is found in the nucleus. It catalyses the reaction L-seryl-[protein] + ATP = O-phospho-L-seryl-[protein] + ADP + H(+). It carries out the reaction L-threonyl-[protein] + ATP = O-phospho-L-threonyl-[protein] + ADP + H(+). This Homo sapiens (Human) protein is Cyclin-dependent kinase 19 (CDK19).